Consider the following 218-residue polypeptide: Large ribosomal subunit protein bL25 (218 aa).

Residues 187–218 (SATAAVEEAKEDGAPEESAQGQGAAEAQETNK) form a disordered region. Residues 202-218 (EESAQGQGAAEAQETNK) show a composition bias toward low complexity.

It belongs to the bacterial ribosomal protein bL25 family. CTC subfamily. Part of the 50S ribosomal subunit; part of the 5S rRNA/L5/L18/L25 subcomplex. Contacts the 5S rRNA. Binds to the 5S rRNA independently of L5 and L18.

This is one of the proteins that binds to the 5S RNA in the ribosome where it forms part of the central protuberance. The sequence is that of Large ribosomal subunit protein bL25 from Anaplasma marginale (strain St. Maries).